The sequence spans 139 residues: Trafficking protein particle complex subunit 2-like protein (139 aa).

Belongs to the TRAPP small subunits family. Sedlin subfamily.

It localises to the cytoplasm. It is found in the perinuclear region. The protein resides in the endoplasmic reticulum. Its subcellular location is the golgi apparatus. In terms of biological role, may play a role in vesicular transport from endoplasmic reticulum to Golgi. This chain is Trafficking protein particle complex subunit 2-like protein (TRAPPC2L), found in Taeniopygia guttata (Zebra finch).